The chain runs to 445 residues: Deoxyribodipyrimidine photo-lyase (445 aa).

The Photolyase/cryptochrome alpha/beta domain maps to 20–148 (SYVVYWMQAS…QVESNVIVPV (129 aa)). R239 serves as a coordination point for DNA.

This sequence belongs to the DNA photolyase class-2 family. The cofactor is FAD. It depends on coenzyme F420-(gamma-Glu)n as a cofactor.

The catalysed reaction is cyclobutadipyrimidine (in DNA) = 2 pyrimidine residues (in DNA).. Functionally, involved in repair of UV radiation-induced DNA damage. Catalyzes the light-dependent monomerization (300-600 nm) of cyclobutyl pyrimidine dimers (in cis-syn configuration), which are formed between adjacent bases on the same DNA strand upon exposure to ultraviolet radiation. This chain is Deoxyribodipyrimidine photo-lyase (phr), found in Methanothermobacter thermautotrophicus (strain ATCC 29096 / DSM 1053 / JCM 10044 / NBRC 100330 / Delta H) (Methanobacterium thermoautotrophicum).